A 74-amino-acid chain; its full sequence is NADH dehydrogenase [ubiquinone] 1 alpha subcomplex assembly factor 8 (74 aa).

One can recognise a CHCH domain in the interval 22–69 (LAACGAEASAYGKCVQASTAPGGRLSKDLCVREFEALRSCFAAAAKKT). Short sequence motifs (cx9C motif) lie at residues 25–35 (CGAEASAYGKC) and 51–61 (CVREFEALRSC). 2 disulfide bridges follow: Cys-25–Cys-61 and Cys-35–Cys-51.

Interacts with NDUFAF5.

It localises to the mitochondrion. Its function is as follows. Involved in the assembly of mitochondrial NADH:ubiquinone oxidoreductase complex (complex I, MT-ND1). Required to stabilize NDUFAF5. The polypeptide is NADH dehydrogenase [ubiquinone] 1 alpha subcomplex assembly factor 8 (Mus musculus (Mouse)).